A 426-amino-acid chain; its full sequence is 3-phosphoshikimate 1-carboxyvinyltransferase (426 aa).

3-phosphoshikimate is bound by residues Lys-22, Ser-23, and Arg-27. Lys-22 contacts phosphoenolpyruvate. 2 residues coordinate phosphoenolpyruvate: Gly-96 and Arg-124. 3-phosphoshikimate-binding residues include Ser-170, Ser-171, Gln-172, Ser-198, Asp-314, Asn-337, and Lys-341. A phosphoenolpyruvate-binding site is contributed by Gln-172. Asp-314 functions as the Proton acceptor in the catalytic mechanism. 3 residues coordinate phosphoenolpyruvate: Arg-345, Arg-387, and Lys-412.

This sequence belongs to the EPSP synthase family. Monomer.

It localises to the cytoplasm. It catalyses the reaction 3-phosphoshikimate + phosphoenolpyruvate = 5-O-(1-carboxyvinyl)-3-phosphoshikimate + phosphate. It functions in the pathway metabolic intermediate biosynthesis; chorismate biosynthesis; chorismate from D-erythrose 4-phosphate and phosphoenolpyruvate: step 6/7. Functionally, catalyzes the transfer of the enolpyruvyl moiety of phosphoenolpyruvate (PEP) to the 5-hydroxyl of shikimate-3-phosphate (S3P) to produce enolpyruvyl shikimate-3-phosphate and inorganic phosphate. This chain is 3-phosphoshikimate 1-carboxyvinyltransferase, found in Shewanella loihica (strain ATCC BAA-1088 / PV-4).